The following is a 122-amino-acid chain: Small ribosomal subunit protein uS13 (122 aa).

A compositionally biased stretch (basic residues) spans 95-116 (GLPVRGQKTKTNARTRKGRRKT). The interval 95 to 122 (GLPVRGQKTKTNARTRKGRRKTVGAATK) is disordered.

It belongs to the universal ribosomal protein uS13 family. As to quaternary structure, part of the 30S ribosomal subunit. Forms a loose heterodimer with protein S19. Forms two bridges to the 50S subunit in the 70S ribosome.

Its function is as follows. Located at the top of the head of the 30S subunit, it contacts several helices of the 16S rRNA. In the 70S ribosome it contacts the 23S rRNA (bridge B1a) and protein L5 of the 50S subunit (bridge B1b), connecting the 2 subunits; these bridges are implicated in subunit movement. Contacts the tRNAs in the A and P-sites. This Campylobacter curvus (strain 525.92) protein is Small ribosomal subunit protein uS13.